A 403-amino-acid chain; its full sequence is Flavohemoprotein (403 aa).

The Globin domain maps to Met-1–Lys-138. Heme b is bound at residue His-85. Catalysis depends on charge relay system residues Tyr-95 and Glu-137. Residues Gly-149–Gly-403 form a reductase region. In terms of domain architecture, FAD-binding FR-type spans Arg-152 to Gln-257. Residues Tyr-190 and Arg-206–Ser-209 contribute to the FAD site. Position 269–274 (Gly-269–Pro-274) interacts with NADP(+). Residue Thr-390–Pro-393 participates in FAD binding.

It belongs to the globin family. Two-domain flavohemoproteins subfamily. This sequence in the C-terminal section; belongs to the flavoprotein pyridine nucleotide cytochrome reductase family. It depends on heme b as a cofactor. FAD is required as a cofactor.

The catalysed reaction is 2 nitric oxide + NADPH + 2 O2 = 2 nitrate + NADP(+) + H(+). It catalyses the reaction 2 nitric oxide + NADH + 2 O2 = 2 nitrate + NAD(+) + H(+). In Deinococcus radiodurans (strain ATCC 13939 / DSM 20539 / JCM 16871 / CCUG 27074 / LMG 4051 / NBRC 15346 / NCIMB 9279 / VKM B-1422 / R1), this protein is Flavohemoprotein.